We begin with the raw amino-acid sequence, 242 residues long: Interleukin-34 (242 aa).

A signal peptide spans 1-20 (MPRGFTWLRYLGIFLGVALG). Asn76 carries an N-linked (GlcNAc...) asparagine glycan. Positions 210-242 (TQLYPPPPWSPSSPPHSTGSVRPVRAQGEGLLP) are disordered. Residues 213-223 (YPPPPWSPSSP) are compositionally biased toward pro residues.

Belongs to the IL-34 family. As to quaternary structure, homodimer. Interacts with CSF1R. As to expression, detected in the sinusoidal epithelium in the red pulp of spleen (at protein level). Predominantly expressed in spleen. Also detected in a range of other tissues including heart, brain, lung, liver, kidney, thymus, testis, ovary, small intestine, prostate and colon.

It localises to the secreted. In terms of biological role, cytokine that promotes the proliferation, survival and differentiation of monocytes and macrophages. Promotes the release of pro-inflammatory chemokines, and thereby plays an important role in innate immunity and in inflammatory processes. Plays an important role in the regulation of osteoclast proliferation and differentiation, and in the regulation of bone resorption. Signaling via CSF1R and its downstream effectors stimulates phosphorylation of MAPK1/ERK2 AND MAPK3/ERK1. The protein is Interleukin-34 (IL34) of Homo sapiens (Human).